The chain runs to 286 residues: ATP synthase gamma chain (286 aa).

The protein belongs to the ATPase gamma chain family. F-type ATPases have 2 components, CF(1) - the catalytic core - and CF(0) - the membrane proton channel. CF(1) has five subunits: alpha(3), beta(3), gamma(1), delta(1), epsilon(1). CF(0) has three main subunits: a, b and c.

The protein localises to the cell inner membrane. Its function is as follows. Produces ATP from ADP in the presence of a proton gradient across the membrane. The gamma chain is believed to be important in regulating ATPase activity and the flow of protons through the CF(0) complex. The chain is ATP synthase gamma chain from Solibacter usitatus (strain Ellin6076).